The sequence spans 169 residues: Prolyl-tRNA synthetase associated domain-containing protein 1 (169 aa).

Belongs to the PRORSD1 family.

The chain is Prolyl-tRNA synthetase associated domain-containing protein 1 (Prorsd1) from Mus musculus (Mouse).